A 109-amino-acid chain; its full sequence is Cytochrome c-550 (109 aa).

Residues cysteine 13, cysteine 16, histidine 17, and methionine 79 each coordinate heme c.

Binds 1 heme c group covalently per subunit.

The protein is Cytochrome c-550 of Nitrobacter winogradskyi (Nitrobacter agilis).